The primary structure comprises 242 residues: UPF0246 protein SPH_1662 (242 aa).

Belongs to the UPF0246 family.

This is UPF0246 protein SPH_1662 from Streptococcus pneumoniae (strain Hungary19A-6).